We begin with the raw amino-acid sequence, 254 residues long: 3-deoxy-manno-octulosonate cytidylyltransferase (254 aa).

It belongs to the KdsB family.

The protein resides in the cytoplasm. The enzyme catalyses 3-deoxy-alpha-D-manno-oct-2-ulosonate + CTP = CMP-3-deoxy-beta-D-manno-octulosonate + diphosphate. It functions in the pathway nucleotide-sugar biosynthesis; CMP-3-deoxy-D-manno-octulosonate biosynthesis; CMP-3-deoxy-D-manno-octulosonate from 3-deoxy-D-manno-octulosonate and CTP: step 1/1. Its pathway is bacterial outer membrane biogenesis; lipopolysaccharide biosynthesis. Its function is as follows. Activates KDO (a required 8-carbon sugar) for incorporation into bacterial lipopolysaccharide in Gram-negative bacteria. The polypeptide is 3-deoxy-manno-octulosonate cytidylyltransferase (Geobacter metallireducens (strain ATCC 53774 / DSM 7210 / GS-15)).